Reading from the N-terminus, the 568-residue chain is Malate synthase, glyoxysomal (568 aa).

Positions 1-20 (MGSLGMYSESGLTKKGSSRG) are disordered. Catalysis depends on Arg-183, which acts as the Proton acceptor. Asp-469 functions as the Proton donor in the catalytic mechanism. The Microbody targeting signal motif lies at 566–568 (SKL).

The protein belongs to the malate synthase family.

The protein resides in the glyoxysome. The enzyme catalyses glyoxylate + acetyl-CoA + H2O = (S)-malate + CoA + H(+). It participates in carbohydrate metabolism; glyoxylate cycle; (S)-malate from isocitrate: step 2/2. This is Malate synthase, glyoxysomal from Cucumis sativus (Cucumber).